Consider the following 243-residue polypeptide: Outer membrane protein A (243 aa).

The next 5 membrane-spanning stretches (beta stranded) occupy residues 1–8 (LTAKLGYP), 13–21 (LDIYTRLGG), 47–56 (PVFAGGLEWA), 61–68 (IATRLEYQ), and 87–95 (LLSVGVSYR). 4 repeat units span residues 107-108 (AP), 109-110 (AP), 111-112 (AP), and 113-114 (AP). The interval 107–114 (APAPAPAP) is 4 X 2 AA tandem repeats of A-P. In terms of domain architecture, OmpA-like spans 116 to 243 (VQTKHFTLKS…RRVEIEVKGI (128 aa)). A disulfide bond links C217 and C229.

Belongs to the outer membrane OOP (TC 1.B.6) superfamily. OmpA family. Monomer and homodimer.

It is found in the cell outer membrane. Functionally, with TolR probably plays a role in maintaining the position of the peptidoglycan cell wall in the periplasm. Acts as a porin with low permeability that allows slow penetration of small solutes; an internal gate slows down solute passage. This Atlantibacter hermannii (Escherichia hermannii) protein is Outer membrane protein A.